Consider the following 305-residue polypeptide: Glutaminase (305 aa).

Substrate is bound by residues S61, N113, E158, N165, Y189, Y241, and V259.

Belongs to the glutaminase family. As to quaternary structure, homotetramer.

The enzyme catalyses L-glutamine + H2O = L-glutamate + NH4(+). This Clostridium botulinum (strain ATCC 19397 / Type A) protein is Glutaminase.